Here is a 299-residue protein sequence, read N- to C-terminus: Glutamyl-Q tRNA(Asp) synthetase (299 aa).

Residues 9 to 13 (RFAPS) and Glu-45 contribute to the L-glutamate site. A 'HIGH' region motif is present at residues 12–22 (PSPTGPLHFGS). Zn(2+) is bound by residues Cys-101, Cys-103, and Cys-118. Residues Tyr-170 and Arg-188 each coordinate L-glutamate. Positions 226 to 230 (KLSKS) match the 'KMSKS' region motif. Lys-229 provides a ligand contact to ATP. The interval 279–299 (QLLPRQRQRDRATCAYERQRD) is disordered. Residues 285-299 (RQRDRATCAYERQRD) show a composition bias toward basic and acidic residues.

Belongs to the class-I aminoacyl-tRNA synthetase family. GluQ subfamily. It depends on Zn(2+) as a cofactor.

Its function is as follows. Catalyzes the tRNA-independent activation of glutamate in presence of ATP and the subsequent transfer of glutamate onto a tRNA(Asp). Glutamate is transferred on the 2-amino-5-(4,5-dihydroxy-2-cyclopenten-1-yl) moiety of the queuosine in the wobble position of the QUC anticodon. The protein is Glutamyl-Q tRNA(Asp) synthetase of Xanthomonas oryzae pv. oryzae (strain KACC10331 / KXO85).